Consider the following 264-residue polypeptide: ATP synthase subunit a (264 aa).

Transmembrane regions (helical) follow at residues 27–47 (VHLD…FVFS), 87–107 (VGPL…IDLI), 131–151 (DISG…FYTI), 172–192 (LLIP…PVSL), 196–216 (LFGN…MYMA), and 230–250 (LAWA…FMML).

The protein belongs to the ATPase A chain family. In terms of assembly, F-type ATPases have 2 components, CF(1) - the catalytic core - and CF(0) - the membrane proton channel. CF(1) has five subunits: alpha(3), beta(3), gamma(1), delta(1), epsilon(1). CF(0) has three main subunits: a(1), b(2) and c(9-12). The alpha and beta chains form an alternating ring which encloses part of the gamma chain. CF(1) is attached to CF(0) by a central stalk formed by the gamma and epsilon chains, while a peripheral stalk is formed by the delta and b chains.

The protein resides in the cell inner membrane. In terms of biological role, key component of the proton channel; it plays a direct role in the translocation of protons across the membrane. This Pasteurella multocida (strain Pm70) protein is ATP synthase subunit a.